We begin with the raw amino-acid sequence, 564 residues long: Eukaryotic translation initiation factor 3 subunit L (564 aa).

Position 2 is an N-acetylserine (Ser2). Ser21 carries the post-translational modification Phosphoserine. In terms of domain architecture, PCI spans 331-537; it reads DAIRVFANIL…IHIADTKVAR (207 aa). An N6-acetyllysine mark is found at Lys465 and Lys549.

This sequence belongs to the eIF-3 subunit L family. As to quaternary structure, component of the eukaryotic translation initiation factor 3 (eIF-3) complex, which is composed of 13 subunits: EIF3A, EIF3B, EIF3C, EIF3D, EIF3E, EIF3F, EIF3G, EIF3H, EIF3I, EIF3J, EIF3K, EIF3L and EIF3M. The eIF-3 complex appears to include 3 stable modules: module A is composed of EIF3A, EIF3B, EIF3G and EIF3I; module B is composed of EIF3F, EIF3H, and EIF3M; and module C is composed of EIF3C, EIF3D, EIF3E, EIF3K and EIF3L. EIF3C of module C binds EIF3B of module A and EIF3H of module B, thereby linking the three modules. EIF3J is a labile subunit that binds to the eIF-3 complex via EIF3B. The eIF-3 complex interacts with RPS6KB1 under conditions of nutrient depletion. Mitogenic stimulation leads to binding and activation of a complex composed of MTOR and RPTOR, leading to phosphorylation and release of RPS6KB1 and binding of EIF4B to eIF-3. Interacts with RRN3.

The protein localises to the cytoplasm. Component of the eukaryotic translation initiation factor 3 (eIF-3) complex, which is required for several steps in the initiation of protein synthesis. The eIF-3 complex associates with the 40S ribosome and facilitates the recruitment of eIF-1, eIF-1A, eIF-2:GTP:methionyl-tRNAi and eIF-5 to form the 43S pre-initiation complex (43S PIC). The eIF-3 complex stimulates mRNA recruitment to the 43S PIC and scanning of the mRNA for AUG recognition. The eIF-3 complex is also required for disassembly and recycling of post-termination ribosomal complexes and subsequently prevents premature joining of the 40S and 60S ribosomal subunits prior to initiation. The eIF-3 complex specifically targets and initiates translation of a subset of mRNAs involved in cell proliferation, including cell cycling, differentiation and apoptosis, and uses different modes of RNA stem-loop binding to exert either translational activation or repression. This chain is Eukaryotic translation initiation factor 3 subunit L, found in Pan troglodytes (Chimpanzee).